We begin with the raw amino-acid sequence, 122 residues long: uncharacterized protein (122 aa).

Positions 1–15 (MAEPGGRGDYHKDGR) are enriched in basic and acidic residues. Residues 1-26 (MAEPGGRGDYHKDGRPPSLSRSPLFT) form a disordered region.

This is an uncharacterized protein from Macaca fascicularis (Crab-eating macaque).